A 233-amino-acid polypeptide reads, in one-letter code: Proteasome subunit beta type-6 (233 aa).

A propeptide spans M1 to G12 (removed in mature form). T13 serves as the catalytic Nucleophile.

The protein belongs to the peptidase T1B family. In terms of assembly, component of the 20S core complex of the 26S proteasome. The 26S proteasome is composed of a core protease (CP), known as the 20S proteasome, capped at one or both ends by the 19S regulatory particle (RP/PA700). The 20S proteasome core is composed of 28 subunits that are arranged in four stacked rings, resulting in a barrel-shaped structure. The two end rings are each formed by seven alpha subunits, and the two central rings are each formed by seven beta subunits. The catalytic chamber with the active sites is on the inside of the barrel.

Its subcellular location is the cytoplasm. It localises to the nucleus. It carries out the reaction Cleavage of peptide bonds with very broad specificity.. Its function is as follows. The proteasome is a multicatalytic proteinase complex which is characterized by its ability to cleave peptides with Arg, Phe, Tyr, Leu, and Glu adjacent to the leaving group at neutral or slightly basic pH. The proteasome has an ATP-dependent proteolytic activity. This Arabidopsis thaliana (Mouse-ear cress) protein is Proteasome subunit beta type-6 (PBA1).